The sequence spans 193 residues: dTTP/UTP pyrophosphatase (193 aa).

The active-site Proton acceptor is the D75.

This sequence belongs to the Maf family. YhdE subfamily. A divalent metal cation is required as a cofactor.

Its subcellular location is the cytoplasm. The catalysed reaction is dTTP + H2O = dTMP + diphosphate + H(+). The enzyme catalyses UTP + H2O = UMP + diphosphate + H(+). Its function is as follows. Nucleoside triphosphate pyrophosphatase that hydrolyzes dTTP and UTP. May have a dual role in cell division arrest and in preventing the incorporation of modified nucleotides into cellular nucleic acids. This is dTTP/UTP pyrophosphatase from Chlorobium phaeovibrioides (strain DSM 265 / 1930) (Prosthecochloris vibrioformis (strain DSM 265)).